The following is a 2939-amino-acid chain: Serine/threonine-protein kinase tel1 (2939 aa).

Disordered stretches follow at residues 193–212 (GTSVRASPAPGTPATSRAGS), 695–718 (PPEDSHKATSTDQPKREEIRAADS), and 859–886 (KTRRESPTDSDPASMDLDDEFDSQETRK). Over residues 697 to 715 (EDSHKATSTDQPKREEIRA) the composition is skewed to basic and acidic residues. The region spanning 1869–2471 (IAAAAATRCG…MYQIWSGVKA (603 aa)) is the FAT domain. Residues 2577–2890 (FEPQMSIASG…DKKSTKNLNE (314 aa)) enclose the PI3K/PI4K catalytic domain. Residues 2583–2589 (IASGVSA) form a G-loop region. A catalytic loop region spans residues 2755–2763 (GLGDRHGHN). Residues 2775 to 2799 (HIDLGVAFELGRILPVPELVPFRLT) are activation loop. A disordered region spans residues 2869 to 2894 (DVVEAEDERRAGDKKSTKNLNEPSEA). The span at 2875–2884 (DERRAGDKKS) shows a compositional bias: basic and acidic residues. Positions 2907 to 2939 (KTLSVMATVNDLINQATDERNLAVLFCGWAAYA) constitute an FATC domain.

Belongs to the PI3/PI4-kinase family. ATM subfamily. Associates with DNA double-strand breaks.

It localises to the nucleus. The protein resides in the chromosome. The protein localises to the telomere. It catalyses the reaction L-seryl-[protein] + ATP = O-phospho-L-seryl-[protein] + ADP + H(+). The enzyme catalyses L-threonyl-[protein] + ATP = O-phospho-L-threonyl-[protein] + ADP + H(+). Serine/threonine protein kinase which activates checkpoint signaling upon genotoxic stresses such as ionizing radiation (IR), ultraviolet light (UV), or DNA replication stalling, thereby acting as a DNA damage sensor. Recognizes the substrate consensus sequence [ST]-Q. Phosphorylates histone H2A to form H2AS128ph (gamma-H2A) at sites of DNA damage, involved in the regulation of DNA damage response mechanism. Required for the control of telomere length and genome stability. This chain is Serine/threonine-protein kinase tel1 (mus-21), found in Neurospora crassa (strain ATCC 24698 / 74-OR23-1A / CBS 708.71 / DSM 1257 / FGSC 987).